Reading from the N-terminus, the 304-residue chain is MTEQNQQPKTYCGFIAIVGRPNVGKSTLLNKILGQKISITSRKAQTTRHRIVGIHTEDQYQAIYVDTPGLHIEEKRAINRLMNRAASSAIGDVDLIIFVVEGTKWTDDDEMVLNKLRSAKAPVVLAINKVDNIKEKDELLPHITELSQKFDFAEILPISAQRGKNVHILQKIVRKSLREGVHHFPEEYVTDRSQRFMASEIIREKLMRFTGEELPYSVTVEIEQFKLNERGTYEINGLILVEREGQKKMVIGAKGQKIKTIGMEARADMERLFDNKVHLELWVKVKAGWADDERALRSLGYMDE.

An Era-type G domain is found at 11–179; that stretch reads YCGFIAIVGR…QKIVRKSLRE (169 aa). A G1 region spans residues 19 to 26; it reads GRPNVGKS. GTP is bound at residue 19 to 26; the sequence is GRPNVGKS. Residues 45–49 form a G2 region; the sequence is QTTRH. The G3 stretch occupies residues 66-69; it reads DTPG. GTP contacts are provided by residues 66–70 and 128–131; these read DTPGL and NKVD. The interval 128–131 is G4; sequence NKVD. The tract at residues 158 to 160 is G5; sequence ISA. Residues 210–287 form the KH type-2 domain; sequence TGEELPYSVT…HLELWVKVKA (78 aa).

It belongs to the TRAFAC class TrmE-Era-EngA-EngB-Septin-like GTPase superfamily. Era GTPase family. As to quaternary structure, monomer.

The protein localises to the cytoplasm. It localises to the cell inner membrane. Functionally, an essential GTPase that binds both GDP and GTP, with rapid nucleotide exchange. Plays a role in 16S rRNA processing and 30S ribosomal subunit biogenesis and possibly also in cell cycle regulation and energy metabolism. The polypeptide is GTPase Era (Actinobacillus pleuropneumoniae serotype 5b (strain L20)).